Consider the following 261-residue polypeptide: Cytochrome c oxidase subunit 3 (261 aa).

The Mitochondrial matrix segment spans residues 1–15 (MTHQTHAYHMVNPSP). The chain crosses the membrane as a helical span at residues 16–34 (WPLTGALSALLMTSGLIMW). Residues 35-40 (FHFNST) lie on the Mitochondrial intermembrane side of the membrane. A helical membrane pass occupies residues 41–66 (TLLMLGLTTNMLTMYQWWRDVVREST). The Mitochondrial matrix portion of the chain corresponds to 67–72 (FQGHHT). Residues 73-105 (PNVQKGLRYGMILFIISEVLFFTGFFWAFYHSS) form a helical membrane-spanning segment. At 106–128 (LAPTPELGGCWPPTGINPLNPLE) the chain is on the mitochondrial intermembrane side. A helical membrane pass occupies residues 129-152 (VPLLNTSVLLASGVSITWAHHSLM). Over 153-155 (EGN) the chain is Mitochondrial matrix. Residues 156–183 (RNHMLQALFITIALGVYFTLLQASEYYE) form a helical membrane-spanning segment. The Mitochondrial intermembrane segment spans residues 184 to 190 (APFTISD). Residues 191–223 (GVYGSTFFVATGFHGLHVIIGSTFLIVCFFRQL) form a helical membrane-spanning segment. The Mitochondrial matrix segment spans residues 224–232 (KFHFTSNHH). The chain crosses the membrane as a helical span at residues 233–256 (FGFEAAAWYWHFVDVVWLFLYVSI). Residues 257 to 261 (YWWGS) are Mitochondrial intermembrane-facing.

The protein belongs to the cytochrome c oxidase subunit 3 family. Component of the cytochrome c oxidase (complex IV, CIV), a multisubunit enzyme composed of 14 subunits. The complex is composed of a catalytic core of 3 subunits MT-CO1, MT-CO2 and MT-CO3, encoded in the mitochondrial DNA, and 11 supernumerary subunits COX4I, COX5A, COX5B, COX6A, COX6B, COX6C, COX7A, COX7B, COX7C, COX8 and NDUFA4, which are encoded in the nuclear genome. The complex exists as a monomer or a dimer and forms supercomplexes (SCs) in the inner mitochondrial membrane with NADH-ubiquinone oxidoreductase (complex I, CI) and ubiquinol-cytochrome c oxidoreductase (cytochrome b-c1 complex, complex III, CIII), resulting in different assemblies (supercomplex SCI(1)III(2)IV(1) and megacomplex MCI(2)III(2)IV(2)).

The protein localises to the mitochondrion inner membrane. It catalyses the reaction 4 Fe(II)-[cytochrome c] + O2 + 8 H(+)(in) = 4 Fe(III)-[cytochrome c] + 2 H2O + 4 H(+)(out). In terms of biological role, component of the cytochrome c oxidase, the last enzyme in the mitochondrial electron transport chain which drives oxidative phosphorylation. The respiratory chain contains 3 multisubunit complexes succinate dehydrogenase (complex II, CII), ubiquinol-cytochrome c oxidoreductase (cytochrome b-c1 complex, complex III, CIII) and cytochrome c oxidase (complex IV, CIV), that cooperate to transfer electrons derived from NADH and succinate to molecular oxygen, creating an electrochemical gradient over the inner membrane that drives transmembrane transport and the ATP synthase. Cytochrome c oxidase is the component of the respiratory chain that catalyzes the reduction of oxygen to water. Electrons originating from reduced cytochrome c in the intermembrane space (IMS) are transferred via the dinuclear copper A center (CU(A)) of subunit 2 and heme A of subunit 1 to the active site in subunit 1, a binuclear center (BNC) formed by heme A3 and copper B (CU(B)). The BNC reduces molecular oxygen to 2 water molecules using 4 electrons from cytochrome c in the IMS and 4 protons from the mitochondrial matrix. The sequence is that of Cytochrome c oxidase subunit 3 (MT-CO3) from Gazella leptoceros (Sand gazelle).